Here is a 345-residue protein sequence, read N- to C-terminus: tRNA pseudouridine synthase B (345 aa).

Positions 1–33 are disordered; sequence MGGNSQPHQEPRRVNNDPRAKQQKGNQVRRDRR. Residues 9–20 are compositionally biased toward basic and acidic residues; that stretch reads QEPRRVNNDPRA. Catalysis depends on aspartate 72, which acts as the Nucleophile.

It belongs to the pseudouridine synthase TruB family. Type 1 subfamily.

It carries out the reaction uridine(55) in tRNA = pseudouridine(55) in tRNA. Responsible for synthesis of pseudouridine from uracil-55 in the psi GC loop of transfer RNAs. The sequence is that of tRNA pseudouridine synthase B from Bradyrhizobium diazoefficiens (strain JCM 10833 / BCRC 13528 / IAM 13628 / NBRC 14792 / USDA 110).